We begin with the raw amino-acid sequence, 120 residues long: MASRKDTLVRRASRVRRQIKAVANGRPRLSVHRSSKNIYAQIIDDVAGKTIASASTLDTDLRFSLKTGADTEAATAVGKLLAERASKAGVKDVVFDRGAFIYHGRIKALAEAAREGGLNF.

This sequence belongs to the universal ribosomal protein uL18 family. Part of the 50S ribosomal subunit; part of the 5S rRNA/L5/L18/L25 subcomplex. Contacts the 5S and 23S rRNAs.

Functionally, this is one of the proteins that bind and probably mediate the attachment of the 5S RNA into the large ribosomal subunit, where it forms part of the central protuberance. This chain is Large ribosomal subunit protein uL18, found in Sinorhizobium medicae (strain WSM419) (Ensifer medicae).